A 372-amino-acid chain; its full sequence is Biotin synthase (372 aa).

The 236-residue stretch at 73–308 (CCGNTVDLCS…QQIIRYAGGR (236 aa)) folds into the Radical SAM core domain. [4Fe-4S] cluster contacts are provided by Cys91, Cys95, and Cys98. Cys136, Cys173, Cys233, and Arg303 together coordinate [2Fe-2S] cluster.

Belongs to the radical SAM superfamily. Biotin synthase family. Homodimer. [4Fe-4S] cluster serves as cofactor. The cofactor is [2Fe-2S] cluster.

It carries out the reaction (4R,5S)-dethiobiotin + (sulfur carrier)-SH + 2 reduced [2Fe-2S]-[ferredoxin] + 2 S-adenosyl-L-methionine = (sulfur carrier)-H + biotin + 2 5'-deoxyadenosine + 2 L-methionine + 2 oxidized [2Fe-2S]-[ferredoxin]. The protein operates within cofactor biosynthesis; biotin biosynthesis; biotin from 7,8-diaminononanoate: step 2/2. In terms of biological role, catalyzes the conversion of dethiobiotin (DTB) to biotin by the insertion of a sulfur atom into dethiobiotin via a radical-based mechanism. This Cyanothece sp. (strain PCC 7425 / ATCC 29141) protein is Biotin synthase.